Reading from the N-terminus, the 215-residue chain is Probable nicotinate-nucleotide adenylyltransferase (215 aa).

Belongs to the NadD family.

It catalyses the reaction nicotinate beta-D-ribonucleotide + ATP + H(+) = deamido-NAD(+) + diphosphate. It functions in the pathway cofactor biosynthesis; NAD(+) biosynthesis; deamido-NAD(+) from nicotinate D-ribonucleotide: step 1/1. Catalyzes the reversible adenylation of nicotinate mononucleotide (NaMN) to nicotinic acid adenine dinucleotide (NaAD). The chain is Probable nicotinate-nucleotide adenylyltransferase from Shewanella putrefaciens (strain CN-32 / ATCC BAA-453).